The following is a 440-amino-acid chain: Transposon Ty1-ML1 Gag polyprotein (440 aa).

Composition is skewed to polar residues over residues 1–23, 48–60, and 127–152; these read MESQQLSNYPNISHGSACASVTS, TKANSQQTTTPAS, and QSQFPQYPSSVGTPLSTPSPESGNTF. 3 disordered regions span residues 1-88, 126-173, and 352-440; these read MESQ…YPQQ, PQSQ…RPPP, and GSRN…PETY. Over residues 153-165 the composition is skewed to low complexity; it reads TDSSSADSDMTST. The interval 299–401 is RNA-binding; sequence NNGIHINNKV…NSKSKTARAH (103 aa). A compositionally biased stretch (low complexity) spans 402–418; sequence NVSTSNNSPSTDNDSIS. Position 416 is a phosphoserine (serine 416). Over residues 419-428 the composition is skewed to polar residues; that stretch reads KSTTEPIQLN. Residues 429-440 are compositionally biased toward basic and acidic residues; it reads NKHDLHLRPETY.

As to quaternary structure, homotrimer.

It is found in the cytoplasm. Its function is as follows. Capsid protein (CA) is the structural component of the virus-like particle (VLP), forming the shell that encapsulates the retrotransposons dimeric RNA genome. The particles are assembled from trimer-clustered units and there are holes in the capsid shells that allow for the diffusion of macromolecules. CA also has nucleocapsid-like chaperone activity, promoting primer tRNA(i)-Met annealing to the multipartite primer-binding site (PBS), dimerization of Ty1 RNA and initiation of reverse transcription. The polypeptide is Transposon Ty1-ML1 Gag polyprotein (TY1A-ML1) (Saccharomyces cerevisiae (strain ATCC 204508 / S288c) (Baker's yeast)).